A 495-amino-acid polypeptide reads, in one-letter code: GTPase Der (495 aa).

2 EngA-type G domains span residues 3–166 (PVVA…VQDE) and 208–381 (IKLA…ACAT). GTP is bound by residues 9–16 (GRPNVGKS), 56–60 (DTGGI), 118–121 (NKTD), 214–221 (GRPNVGKS), 261–265 (DTAGV), and 326–329 (NKWD). Residues 382–466 (RRVSTAMLTR…PIRIQFKEGE (85 aa)) form the KH-like domain.

Belongs to the TRAFAC class TrmE-Era-EngA-EngB-Septin-like GTPase superfamily. EngA (Der) GTPase family. As to quaternary structure, associates with the 50S ribosomal subunit.

In terms of biological role, GTPase that plays an essential role in the late steps of ribosome biogenesis. This is GTPase Der from Pectobacterium carotovorum subsp. carotovorum (strain PC1).